Consider the following 249-residue polypeptide: Uridylate kinase (249 aa).

Residue 13-16 (KLSG) participates in ATP binding. Position 55 (Gly-55) interacts with UMP. ATP is bound by residues Gly-56 and Arg-60. Residues Asp-75 and 136-143 (IGNPFFTT) contribute to the UMP site. Positions 163, 169, and 172 each coordinate ATP.

The protein belongs to the UMP kinase family. In terms of assembly, homohexamer.

The protein localises to the cytoplasm. The catalysed reaction is UMP + ATP = UDP + ADP. Its pathway is pyrimidine metabolism; CTP biosynthesis via de novo pathway; UDP from UMP (UMPK route): step 1/1. With respect to regulation, inhibited by UTP. Its function is as follows. Catalyzes the reversible phosphorylation of UMP to UDP. The sequence is that of Uridylate kinase from Baumannia cicadellinicola subsp. Homalodisca coagulata.